Consider the following 231-residue polypeptide: Fibrillarin-like rRNA/tRNA 2'-O-methyltransferase (231 aa).

S-adenosyl-L-methionine is bound by residues Thr89 to Thr90, Glu108 to Phe109, Asp133 to Ala134, and Asp153 to Gln156.

It belongs to the methyltransferase superfamily. Fibrillarin family. As to quaternary structure, interacts with nop5. Component of box C/D small ribonucleoprotein (sRNP) particles that contain rpl7ae, FlpA and nop5, plus a guide RNA.

Involved in pre-rRNA and tRNA processing. Utilizes the methyl donor S-adenosyl-L-methionine to catalyze the site-specific 2'-hydroxyl methylation of ribose moieties in rRNA and tRNA. Site specificity is provided by a guide RNA that base pairs with the substrate. Methylation occurs at a characteristic distance from the sequence involved in base pairing with the guide RNA. The chain is Fibrillarin-like rRNA/tRNA 2'-O-methyltransferase from Sulfolobus acidocaldarius (strain ATCC 33909 / DSM 639 / JCM 8929 / NBRC 15157 / NCIMB 11770).